Consider the following 601-residue polypeptide: Aspartate--tRNA ligase (601 aa).

E183 provides a ligand contact to L-aspartate. Residues 207-210 are aspartate; it reads QIFK. An L-aspartate-binding site is contributed by R229. ATP contacts are provided by residues 229-231 and Q238; that span reads RDE. H457 contributes to the L-aspartate binding site. E497 is an ATP binding site. R504 is a binding site for L-aspartate. 549 to 552 is a binding site for ATP; it reads GIDR.

It belongs to the class-II aminoacyl-tRNA synthetase family. Type 1 subfamily. Homodimer.

The protein localises to the cytoplasm. The enzyme catalyses tRNA(Asp) + L-aspartate + ATP = L-aspartyl-tRNA(Asp) + AMP + diphosphate. Catalyzes the attachment of L-aspartate to tRNA(Asp) in a two-step reaction: L-aspartate is first activated by ATP to form Asp-AMP and then transferred to the acceptor end of tRNA(Asp). This chain is Aspartate--tRNA ligase, found in Leptospira interrogans serogroup Icterohaemorrhagiae serovar copenhageni (strain Fiocruz L1-130).